A 672-amino-acid polypeptide reads, in one-letter code: Single-strand DNA endonuclease ASTE1 (672 aa).

Residues 349–398 (TFLHTQVENMQRPNAHRISQPIRQIIYGLLLNGPSHAEDIAQNTLPSQLL) form an interaction with SHLD2 region.

The protein belongs to the asteroid family. As to quaternary structure, interacts with SHLD1, SHLD2, SHLD3, RIF1 and MAD2L2/REV7.

In terms of biological role, structure-specific DNA endonuclease that specifically cleaves single-stranded DNA and 3' overhang DNA. Contributes to the control of DNA double-strand break repair choice by antagonizing BRCA1-dependent homologous recombination (HR) and promoting non-homologous end-joining (NHEJ). Recruited to the single-stranded DNA ends by SHLD2 and cleaves the 3' exposed DNA ends, therefore inhibiting DNA end resection (necessary for HR) and promoting DNA end protection (necessary for NHEJ). The sequence is that of Single-strand DNA endonuclease ASTE1 (Aste1) from Mus musculus (Mouse).